Consider the following 460-residue polypeptide: ATP synthase subunit beta (460 aa).

150-157 lines the ATP pocket; that stretch reads GGAGVGKT.

The protein belongs to the ATPase alpha/beta chains family. F-type ATPases have 2 components, CF(1) - the catalytic core - and CF(0) - the membrane proton channel. CF(1) has five subunits: alpha(3), beta(3), gamma(1), delta(1), epsilon(1). CF(0) has three main subunits: a(1), b(2) and c(9-12). The alpha and beta chains form an alternating ring which encloses part of the gamma chain. CF(1) is attached to CF(0) by a central stalk formed by the gamma and epsilon chains, while a peripheral stalk is formed by the delta and b chains.

The protein resides in the cell inner membrane. It catalyses the reaction ATP + H2O + 4 H(+)(in) = ADP + phosphate + 5 H(+)(out). Its function is as follows. Produces ATP from ADP in the presence of a proton gradient across the membrane. The catalytic sites are hosted primarily by the beta subunits. The protein is ATP synthase subunit beta of Klebsiella pneumoniae subsp. pneumoniae (strain ATCC 700721 / MGH 78578).